A 489-amino-acid chain; its full sequence is Glutamyl-tRNA(Gln) amidotransferase subunit A (489 aa).

Catalysis depends on charge relay system residues Lys-77 and Ser-152. The Acyl-ester intermediate role is filled by Ser-176.

The protein belongs to the amidase family. GatA subfamily. In terms of assembly, heterotrimer of A, B and C subunits.

It catalyses the reaction L-glutamyl-tRNA(Gln) + L-glutamine + ATP + H2O = L-glutaminyl-tRNA(Gln) + L-glutamate + ADP + phosphate + H(+). In terms of biological role, allows the formation of correctly charged Gln-tRNA(Gln) through the transamidation of misacylated Glu-tRNA(Gln) in organisms which lack glutaminyl-tRNA synthetase. The reaction takes place in the presence of glutamine and ATP through an activated gamma-phospho-Glu-tRNA(Gln). The polypeptide is Glutamyl-tRNA(Gln) amidotransferase subunit A (Levilactobacillus brevis (strain ATCC 367 / BCRC 12310 / CIP 105137 / JCM 1170 / LMG 11437 / NCIMB 947 / NCTC 947) (Lactobacillus brevis)).